The sequence spans 1132 residues: Large proline-rich protein BAG6 (1132 aa).

Methionine 1 is modified (N-acetylmethionine). The Ubiquitin-like domain occupies 17–92 (LEVLVKTLDS…HLVERAPPQT (76 aa)). 2 disordered regions span residues 87–126 (RAPPQTHLPSGASSGTGSASATHGGGSPPGTRGPGASVHD) and 189–272 (LQCR…NHPS). Over residues 95 to 108 (PSGASSGTGSASAT) the composition is skewed to low complexity. Residues serine 96 and serine 113 each carry the phosphoserine modification. Threonine 117 is subject to Phosphothreonine. Pro residues-rich tracts occupy residues 200 to 210 (SQPPPQPPAVT) and 251 to 262 (TPGPAPAGPTPA). Repeat 1 spans residues 242-270 (RAPAQNPELTPGPAPAGPTPAPETNAPNH). The interval 242–636 (RAPAQNPELT…VASPTITVAM (395 aa)) is 4 X 29 AA approximate repeats. Threonine 350 is modified (phosphothreonine). Disordered stretches follow at residues 385–441 (VTMT…TSHP), 461–528 (IQDS…TLQG), and 560–603 (PGMA…PSMA). The segment covering 393–407 (RPPPTPNAEAPPPGP) has biased composition (pro residues). Positions 408 to 426 (GQASSVAPSSTNVESSAEG) are enriched in low complexity. Repeat unit 2 spans residues 415 to 443 (PSSTNVESSAEGAPPPGPAPPPATSHPRV). 2 stretches are compositionally biased toward pro residues: residues 427–438 (APPPGPAPPPAT) and 507–520 (PTPPQARPSHPGGP). Over residues 569 to 586 (ATASASAGTTNTATTAGP) the composition is skewed to low complexity. 2 tandem repeats follow at residues 574 to 602 (SAGTTNTATTAGPAPGGPAQPPPTPQPSM) and 608 to 636 (SQLLGNLLGPAGPGAGGSGVASPTITVAM). The span at 588–599 (PGGPAQPPPTPQ) shows a compositional bias: pro residues. Residues 651–692 (QATQTAPPPPPPPPPPPPAPEQQTMPPPGSPSGGAGSPGGLG) are disordered. Pro residues predominate over residues 656–680 (APPPPPPPPPPPPAPEQQTMPPPGS). Residues 681–692 (PSGGAGSPGGLG) are compositionally biased toward gly residues. Residues valine 832, serine 964, and serine 973 each carry the phosphoserine modification. The segment at 947–1132 (PQPLPEEPME…NAQRAFADDP (186 aa)) is disordered. The span at 1005 to 1020 (AETEPWAAAVPPEWVP) shows a compositional bias: low complexity. The required for interaction with GET4 stretch occupies residues 1010–1040 (WAAAVPPEWVPIIQQDIQSQRKVKPQPPLSD). A Nuclear localization site motif is present at residues 1012-1054 (AAVPPEWVPIIQQDIQSQRKVKPQPPLSDAYLSGMPAKRRKTM). Positions 1022 to 1132 (IQQDIQSQRK…NAQRAFADDP (111 aa)) are sufficient for the delivery of client proteins to the endoplasmic reticulum. Position 1053 is a phosphothreonine (threonine 1053). The segment at 1058–1115 (GPQLLLSEAVSRAAKAAGARPLTSPESLSRDLEAPEVQESYRQQLRSDIQKRLQEDPN) is BAG-similar domain, required and sufficient for interaction with UBL4A. A compositionally biased stretch (low complexity) spans 1066 to 1076 (AVSRAAKAAGA). Phosphoserine occurs at positions 1081 and 1117.

As to quaternary structure, component of the BAG6/BAT3 complex, also named BAT3 complex, at least composed of BAG6, UBL4A and GET4/TRC35. Interacts with GET4; the interaction is direct and localizes BAG6 in the cytosol. Interacts with UBL4A; the interaction is direct and required for UBL4A protein stability. Interacts with AIFM1. Interacts with HSPA2. Interacts with CTCFL. Interacts with p300/EP300. Interacts (via ubiquitin-like domain) with RNF126; required for BAG6-dependent ubiquitination of proteins mislocalized to the cytosol. Interacts (via ubiquitin-like domain) with SGTA; SGTA competes with RNF126 by binding the same region of BAG6, thereby promoting deubiquitination of BAG6-target proteins and rescuing them from degradation. Interacts with ricin A chain. Interacts with VCP and AMFR; both form the VCP/p97-AMFR/gp78 complex. Interacts with SYVN1. Interacts with USP13; the interaction is direct and may mediate UBL4A deubiquitination. Interacts with ZFAND2B. Interacts with KPNA2. Interacts with UBQLN4. In terms of assembly, (Microbial infection) Interacts with L.pneumophila Lpg2160 and LegU1 proteins. In terms of processing, ricin can induce a cleavage by the caspase CASP3. The released C-terminal peptide induces apoptosis. (Microbial infection) In case of infection by L.pneumophila, ubiquitinated by the SCF(LegU1) complex. As to expression, expressed by immature dendritic cells (at protein level).

The protein localises to the cytoplasm. It is found in the cytosol. It localises to the nucleus. Its subcellular location is the secreted. The protein resides in the extracellular exosome. ATP-independent molecular chaperone preventing the aggregation of misfolded and hydrophobic patches-containing proteins. Functions as part of a cytosolic protein quality control complex, the BAG6/BAT3 complex, which maintains these client proteins in a soluble state and participates in their proper delivery to the endoplasmic reticulum or alternatively can promote their sorting to the proteasome where they undergo degradation. The BAG6/BAT3 complex is involved in the post-translational delivery of tail-anchored/type II transmembrane proteins to the endoplasmic reticulum membrane. Recruited to ribosomes, it interacts with the transmembrane region of newly synthesized tail-anchored proteins and together with SGTA and ASNA1 mediates their delivery to the endoplasmic reticulum. Client proteins that cannot be properly delivered to the endoplasmic reticulum are ubiquitinated by RNF126, an E3 ubiquitin-protein ligase associated with BAG6 and are sorted to the proteasome. SGTA which prevents the recruitment of RNF126 to BAG6 may negatively regulate the ubiquitination and the proteasomal degradation of client proteins. Similarly, the BAG6/BAT3 complex also functions as a sorting platform for proteins of the secretory pathway that are mislocalized to the cytosol either delivering them to the proteasome for degradation or to the endoplasmic reticulum. The BAG6/BAT3 complex also plays a role in the endoplasmic reticulum-associated degradation (ERAD), a quality control mechanism that eliminates unwanted proteins of the endoplasmic reticulum through their retrotranslocation to the cytosol and their targeting to the proteasome. It maintains these retrotranslocated proteins in an unfolded yet soluble state condition in the cytosol to ensure their proper delivery to the proteasome. BAG6 is also required for selective ubiquitin-mediated degradation of defective nascent chain polypeptides by the proteasome. In this context, it may participate in the production of antigenic peptides and play a role in antigen presentation in immune response. BAG6 is also involved in endoplasmic reticulum stress-induced pre-emptive quality control, a mechanism that selectively attenuates the translocation of newly synthesized proteins into the endoplasmic reticulum and reroutes them to the cytosol for proteasomal degradation. BAG6 may ensure the proper degradation of these proteins and thereby protects the endoplasmic reticulum from protein overload upon stress. By inhibiting the polyubiquitination and subsequent proteasomal degradation of HSPA2 it may also play a role in the assembly of the synaptonemal complex during spermatogenesis. Also positively regulates apoptosis by interacting with and stabilizing the proapoptotic factor AIFM1. By controlling the steady-state expression of the IGF1R receptor, indirectly regulates the insulin-like growth factor receptor signaling pathway. Its function is as follows. Involved in DNA damage-induced apoptosis: following DNA damage, accumulates in the nucleus and forms a complex with p300/EP300, enhancing p300/EP300-mediated p53/TP53 acetylation leading to increase p53/TP53 transcriptional activity. When nuclear, may also act as a component of some chromatin regulator complex that regulates histone 3 'Lys-4' dimethylation (H3K4me2). In terms of biological role, released extracellularly via exosomes, it is a ligand of the natural killer/NK cells receptor NCR3 and stimulates NK cells cytotoxicity. It may thereby trigger NK cells cytotoxicity against neighboring tumor cells and immature myeloid dendritic cells (DC). Functionally, mediates ricin-induced apoptosis. The sequence is that of Large proline-rich protein BAG6 from Homo sapiens (Human).